Here is a 525-residue protein sequence, read N- to C-terminus: ATP synthase subunit alpha (525 aa).

171 to 178 is a binding site for ATP; it reads GDRQTGKS.

The protein belongs to the ATPase alpha/beta chains family. In terms of assembly, F-type ATPases have 2 components, CF(1) - the catalytic core - and CF(0) - the membrane proton channel. CF(1) has five subunits: alpha(3), beta(3), gamma(1), delta(1), epsilon(1). CF(0) has three main subunits: a(1), b(2) and c(9-12). The alpha and beta chains form an alternating ring which encloses part of the gamma chain. CF(1) is attached to CF(0) by a central stalk formed by the gamma and epsilon chains, while a peripheral stalk is formed by the delta and b chains.

The protein localises to the cell inner membrane. It carries out the reaction ATP + H2O + 4 H(+)(in) = ADP + phosphate + 5 H(+)(out). In terms of biological role, produces ATP from ADP in the presence of a proton gradient across the membrane. The alpha chain is a regulatory subunit. In Flavobacterium johnsoniae (strain ATCC 17061 / DSM 2064 / JCM 8514 / BCRC 14874 / CCUG 350202 / NBRC 14942 / NCIMB 11054 / UW101) (Cytophaga johnsonae), this protein is ATP synthase subunit alpha.